Reading from the N-terminus, the 257-residue chain is Acyl-[acyl-carrier-protein]--UDP-N-acetylglucosamine O-acyltransferase (257 aa).

Belongs to the transferase hexapeptide repeat family. LpxA subfamily. Homotrimer.

The protein resides in the cytoplasm. The enzyme catalyses a (3R)-hydroxyacyl-[ACP] + UDP-N-acetyl-alpha-D-glucosamine = a UDP-3-O-[(3R)-3-hydroxyacyl]-N-acetyl-alpha-D-glucosamine + holo-[ACP]. It functions in the pathway glycolipid biosynthesis; lipid IV(A) biosynthesis; lipid IV(A) from (3R)-3-hydroxytetradecanoyl-[acyl-carrier-protein] and UDP-N-acetyl-alpha-D-glucosamine: step 1/6. Functionally, involved in the biosynthesis of lipid A, a phosphorylated glycolipid that anchors the lipopolysaccharide to the outer membrane of the cell. This is Acyl-[acyl-carrier-protein]--UDP-N-acetylglucosamine O-acyltransferase from Anaeromyxobacter sp. (strain Fw109-5).